The chain runs to 411 residues: LL-diaminopimelate aminotransferase (411 aa).

Substrate is bound by residues tyrosine 16 and glycine 43. Residues tyrosine 73, 109 to 110 (AK), tyrosine 133, asparagine 188, tyrosine 219, and 247 to 249 (SYS) each bind pyridoxal 5'-phosphate. The substrate site is built by lysine 110, tyrosine 133, and asparagine 188. Lysine 250 carries the N6-(pyridoxal phosphate)lysine modification. 2 residues coordinate pyridoxal 5'-phosphate: arginine 258 and asparagine 293. Substrate is bound by residues asparagine 293 and arginine 389.

It belongs to the class-I pyridoxal-phosphate-dependent aminotransferase family. LL-diaminopimelate aminotransferase subfamily. Homodimer. Requires pyridoxal 5'-phosphate as cofactor.

The enzyme catalyses (2S,6S)-2,6-diaminopimelate + 2-oxoglutarate = (S)-2,3,4,5-tetrahydrodipicolinate + L-glutamate + H2O + H(+). It functions in the pathway amino-acid biosynthesis; L-lysine biosynthesis via DAP pathway; LL-2,6-diaminopimelate from (S)-tetrahydrodipicolinate (aminotransferase route): step 1/1. Functionally, involved in the synthesis of meso-diaminopimelate (m-DAP or DL-DAP), required for both lysine and peptidoglycan biosynthesis. Catalyzes the direct conversion of tetrahydrodipicolinate to LL-diaminopimelate. This chain is LL-diaminopimelate aminotransferase, found in Methanosphaera stadtmanae (strain ATCC 43021 / DSM 3091 / JCM 11832 / MCB-3).